A 204-amino-acid polypeptide reads, in one-letter code: Somatotropin (204 aa).

The first 17 residues, 1-17, serve as a signal peptide directing secretion; that stretch reads MDRVILLLSVVSLGVSS. Gln-18 carries the post-translational modification Pyrrolidone carboxylic acid. Residue His-36 participates in Zn(2+) binding. Residues Cys-69 and Cys-177 are joined by a disulfide bond. Glu-186 serves as a coordination point for Zn(2+). Cys-194 and Cys-202 are disulfide-bonded.

This sequence belongs to the somatotropin/prolactin family.

Its subcellular location is the secreted. Functionally, growth hormone plays an important role in growth control and is involved in the regulation of several anabolic processes. Implicated as an osmoregulatory substance important for seawater adaptation. This Sebastes schlegelii (Korean rockfish) protein is Somatotropin (gh).